The following is a 122-amino-acid chain: Large ribosomal subunit protein bL12 (122 aa).

Belongs to the bacterial ribosomal protein bL12 family. In terms of assembly, homodimer. Part of the ribosomal stalk of the 50S ribosomal subunit. Forms a multimeric L10(L12)X complex, where L10 forms an elongated spine to which 2 to 4 L12 dimers bind in a sequential fashion. Binds GTP-bound translation factors.

Forms part of the ribosomal stalk which helps the ribosome interact with GTP-bound translation factors. Is thus essential for accurate translation. This is Large ribosomal subunit protein bL12 from Streptococcus pneumoniae serotype 19F (strain G54).